Consider the following 365-residue polypeptide: Putative 2-dehydropantoate 2-reductase (365 aa).

The protein belongs to the ketopantoate reductase family.

The catalysed reaction is (R)-pantoate + NADP(+) = 2-dehydropantoate + NADPH + H(+). The protein operates within cofactor biosynthesis; (R)-pantothenate biosynthesis; (R)-pantoate from 3-methyl-2-oxobutanoate: step 2/2. Catalyzes the NADPH-dependent reduction of ketopantoate into pantoic acid. The polypeptide is Putative 2-dehydropantoate 2-reductase (KPR) (Arabidopsis thaliana (Mouse-ear cress)).